A 359-amino-acid chain; its full sequence is Fructose-bisphosphate aldolase (359 aa).

S50 serves as a coordination point for D-glyceraldehyde 3-phosphate. The active-site Proton donor is the D83. H84, D105, E142, and H198 together coordinate Zn(2+). Residue G199 participates in dihydroxyacetone phosphate binding. H232 serves as a coordination point for Zn(2+). Residues G233–S235 and N275–T278 contribute to the dihydroxyacetone phosphate site.

It belongs to the class II fructose-bisphosphate aldolase family. In terms of assembly, homodimer. Zn(2+) serves as cofactor.

The enzyme catalyses beta-D-fructose 1,6-bisphosphate = D-glyceraldehyde 3-phosphate + dihydroxyacetone phosphate. It functions in the pathway carbohydrate biosynthesis; Calvin cycle. The protein operates within carbohydrate degradation; glycolysis; D-glyceraldehyde 3-phosphate and glycerone phosphate from D-glucose: step 4/4. Its function is as follows. Catalyzes the aldol condensation of dihydroxyacetone phosphate (DHAP or glycerone-phosphate) with glyceraldehyde 3-phosphate (G3P) to form fructose 1,6-bisphosphate (FBP) in gluconeogenesis and the reverse reaction in glycolysis. The chain is Fructose-bisphosphate aldolase (cbbA) from Sinorhizobium medicae (strain WSM419) (Ensifer medicae).